Reading from the N-terminus, the 228-residue chain is tRNA (guanine-N(1)-)-methyltransferase (228 aa).

S-adenosyl-L-methionine-binding positions include Gly-111 and 130 to 135; that span reads IGDFVL.

Belongs to the RNA methyltransferase TrmD family. Homodimer.

It is found in the cytoplasm. The enzyme catalyses guanosine(37) in tRNA + S-adenosyl-L-methionine = N(1)-methylguanosine(37) in tRNA + S-adenosyl-L-homocysteine + H(+). Its function is as follows. Specifically methylates guanosine-37 in various tRNAs. In Ureaplasma parvum serovar 3 (strain ATCC 27815 / 27 / NCTC 11736), this protein is tRNA (guanine-N(1)-)-methyltransferase.